The sequence spans 108 residues: MNPGQLAEDRAMKHLCAHGLRLEARNVRYPFGEIDLVMREGRVYVFVEVKFRTPKGFGDAVQALSAAQQQRLRRAATHYLQCHRIDAPCRFDMVAITGDKLEWIKDAF.

Belongs to the UPF0102 family.

In Shewanella amazonensis (strain ATCC BAA-1098 / SB2B), this protein is UPF0102 protein Sama_3355.